The chain runs to 99 residues: uncharacterized protein (99 aa).

An N-terminal signal peptide occupies residues 1–17 (MMMNAFFPAMALIVLVG). The N-palmitoyl cysteine moiety is linked to residue C18. The S-diacylglycerol cysteine moiety is linked to residue C18.

It localises to the cell membrane. This is an uncharacterized protein from Escherichia coli O6:H1 (strain CFT073 / ATCC 700928 / UPEC).